The primary structure comprises 169 residues: Ureidoglycolate lyase (169 aa).

The protein belongs to the ureidoglycolate lyase family. In terms of assembly, homodimer. The cofactor is Ni(2+).

The enzyme catalyses (S)-ureidoglycolate = urea + glyoxylate. Its pathway is nitrogen metabolism; (S)-allantoin degradation. Functionally, catalyzes the catabolism of the allantoin degradation intermediate (S)-ureidoglycolate, generating urea and glyoxylate. Involved in the utilization of allantoin as nitrogen source. This is Ureidoglycolate lyase from Brucella ovis (strain ATCC 25840 / 63/290 / NCTC 10512).